The sequence spans 202 residues: LexA repressor (202 aa).

The H-T-H motif DNA-binding region spans 28-48 (RAEIAQQLGFRSPNAAEEHLK). Residues Ser-119 and Lys-156 each act as for autocatalytic cleavage activity in the active site.

The protein belongs to the peptidase S24 family. As to quaternary structure, homodimer.

The catalysed reaction is Hydrolysis of Ala-|-Gly bond in repressor LexA.. In terms of biological role, represses a number of genes involved in the response to DNA damage (SOS response), including recA and lexA. In the presence of single-stranded DNA, RecA interacts with LexA causing an autocatalytic cleavage which disrupts the DNA-binding part of LexA, leading to derepression of the SOS regulon and eventually DNA repair. The chain is LexA repressor from Pectobacterium atrosepticum (strain SCRI 1043 / ATCC BAA-672) (Erwinia carotovora subsp. atroseptica).